A 507-amino-acid chain; its full sequence is Probable Xaa-Pro aminopeptidase ARB_01886 (507 aa).

Mn(2+) is bound by residues Asp-275, Asp-286, Glu-434, and Glu-478.

Belongs to the peptidase M24B family. Requires Mn(2+) as cofactor.

It carries out the reaction Release of any N-terminal amino acid, including proline, that is linked to proline, even from a dipeptide or tripeptide.. Catalyzes the removal of a penultimate prolyl residue from the N-termini of peptides. The protein is Probable Xaa-Pro aminopeptidase ARB_01886 of Arthroderma benhamiae (strain ATCC MYA-4681 / CBS 112371) (Trichophyton mentagrophytes).